We begin with the raw amino-acid sequence, 363 residues long: NAD(P)H-quinone oxidoreductase subunit 1, chloroplastic (363 aa).

The next 6 membrane-spanning stretches (helical) occupy residues 27–47 (VWLLIPIFILVLGIVIGVLVI), 104–124 (IAVIAILLSYLVIPFGYHLVL), 127–147 (LSIGVFLWIAISSIAPIGLLM), 248–268 (YSGIKFGLFYVASYLNLLVSS), 300–320 (VFGMTIGIFITLAKAYLFLFI), and 343–363 (FLLPISLGNLLLTTSFQLFSL).

Belongs to the complex I subunit 1 family. NDH is composed of at least 16 different subunits, 5 of which are encoded in the nucleus.

The protein localises to the plastid. It localises to the chloroplast thylakoid membrane. It catalyses the reaction a plastoquinone + NADH + (n+1) H(+)(in) = a plastoquinol + NAD(+) + n H(+)(out). The enzyme catalyses a plastoquinone + NADPH + (n+1) H(+)(in) = a plastoquinol + NADP(+) + n H(+)(out). Functionally, NDH shuttles electrons from NAD(P)H:plastoquinone, via FMN and iron-sulfur (Fe-S) centers, to quinones in the photosynthetic chain and possibly in a chloroplast respiratory chain. The immediate electron acceptor for the enzyme in this species is believed to be plastoquinone. Couples the redox reaction to proton translocation, and thus conserves the redox energy in a proton gradient. The chain is NAD(P)H-quinone oxidoreductase subunit 1, chloroplastic from Ranunculus macranthus (Large buttercup).